A 73-amino-acid polypeptide reads, in one-letter code: uncharacterized protein (73 aa).

N-glycosylated.

This is an uncharacterized protein from Saccharomyces cerevisiae (strain ATCC 204508 / S288c) (Baker's yeast).